Consider the following 1407-residue polypeptide: DNA-directed RNA polymerase subunit beta' (1407 aa).

Cys-70, Cys-72, Cys-85, and Cys-88 together coordinate Zn(2+). 3 residues coordinate Mg(2+): Asp-460, Asp-462, and Asp-464. Cys-814, Cys-888, Cys-895, and Cys-898 together coordinate Zn(2+).

Belongs to the RNA polymerase beta' chain family. As to quaternary structure, the RNAP catalytic core consists of 2 alpha, 1 beta, 1 beta' and 1 omega subunit. When a sigma factor is associated with the core the holoenzyme is formed, which can initiate transcription. Mg(2+) is required as a cofactor. The cofactor is Zn(2+).

It catalyses the reaction RNA(n) + a ribonucleoside 5'-triphosphate = RNA(n+1) + diphosphate. Functionally, DNA-dependent RNA polymerase catalyzes the transcription of DNA into RNA using the four ribonucleoside triphosphates as substrates. The polypeptide is DNA-directed RNA polymerase subunit beta' (Buchnera aphidicola subsp. Acyrthosiphon pisum (strain APS) (Acyrthosiphon pisum symbiotic bacterium)).